The chain runs to 113 residues: Fruiting body-specific class I hydrophobin fbh1 (113 aa).

A signal peptide spans 1-20 (MFSIRIATVVLAASALLAAA). Disulfide bonds link Cys-33/Cys-92, Cys-40/Cys-86, Cys-41/Cys-73, and Cys-93/Cys-106.

It belongs to the fungal hydrophobin family. Self-assembles to form functional amyloid fibrils called rodlets. Self-assembly into fibrillar rodlets occurs spontaneously at hydrophobic:hydrophilic interfaces and the rodlets further associate laterally to form amphipathic monolayers.

It localises to the secreted. It is found in the cell wall. Functionally, aerial growth, conidiation, and dispersal of filamentous fungi in the environment rely upon a capability of their secreting small amphipathic proteins called hydrophobins (HPBs) with low sequence identity. Class I can self-assemble into an outermost layer of rodlet bundles on aerial cell surfaces, conferring cellular hydrophobicity that supports fungal growth, development and dispersal; whereas Class II form highly ordered films at water-air interfaces through intermolecular interactions but contribute nothing to the rodlet structure. Fbh1 is a fruiting body-specific class I hydrophobin that is involved in the growth rate and primordia formation. In Pleurotus ostreatus (strain PC15) (Oyster mushroom), this protein is Fruiting body-specific class I hydrophobin fbh1.